The chain runs to 347 residues: uncharacterized protein (347 aa).

The RING-type zinc-finger motif lies at 5–44; it reads CTICHNTPNRPVRLDCNHEFCYICIKGSIQNDMLNCAVCR. A WWE domain is found at 244 to 321; that stretch reads NVQANFNVAR…NLDAWRQIKR (78 aa).

This is an uncharacterized protein from Caenorhabditis elegans.